A 282-amino-acid polypeptide reads, in one-letter code: Aspergillopepsin-2 (282 aa).

Residues 1–18 form the signal peptide; it reads MKFSTILTGSLFATAALA. 2 propeptides span residues 19–59 and 99–109; these read APLT…GTTN and GGGYGYWKNKR. Residues 27-39 are compositionally biased toward basic residues; the sequence is ARKEARAAGKRHS. The tract at residues 27-46 is disordered; that stretch reads ARKEARAAGKRHSNPPYIPG. Q110 carries the pyrrolidone carboxylic acid modification. 2 cysteine pairs are disulfide-bonded: C115–C139 and C127–C210.

The protein belongs to the peptidase G1 family. As to quaternary structure, heterodimer of two noncovalently bound light and heavy chains.

The catalysed reaction is Preferential cleavage in B chain of insulin: 3-Asn-|-Gln-4, 13-Gly-|-Ala-14, and 26-Tyr-|-Thr-27.. In Aspergillus niger, this protein is Aspergillopepsin-2.